We begin with the raw amino-acid sequence, 323 residues long: Formyl peptide receptor-related sequence 4 (323 aa).

At 1–29 (MEVNISMPLNGSEVVFYDSTTSRVLWILS) the chain is on the extracellular side. N-linked (GlcNAc...) asparagine glycans are attached at residues N4 and N10. The helical transmembrane segment at 30-50 (LVVLFITFVLGVLGNGLVIWV) threads the bilayer. Topologically, residues 51–66 (AGFQMAHTVTTVSYLN) are cytoplasmic. The helical transmembrane segment at 67 to 87 (LALSDLSFMATLPLHIISMVM) threads the bilayer. The Extracellular portion of the chain corresponds to 88 to 99 (RGKWLFGWFLCK). C98 and C176 are joined by a disulfide. The helical transmembrane segment at 100–120 (LVHIIANINLFVSIFLITLIA) threads the bilayer. At 121 to 144 (MDRCICVLCPVWSQNHRTVSLARK) the chain is on the cytoplasmic side. Residues 145-165 (VVLGAWIFALLLTLPHFLFLT) form a helical membrane-spanning segment. The Extracellular segment spans residues 166 to 202 (TVRDARGDVYCISKFESWVATSEEQLKVSVIAATASG). The chain crosses the membrane as a helical span at residues 203-223 (IINFIIGFSMPMSFIAICYGL). At 224–241 (MAAKICRRGFVNSSRPLR) the chain is on the cytoplasmic side. A helical transmembrane segment spans residues 242–262 (VLTAVAVSFFVCWFPFQLIML). At 263–280 (LGNIFNNETLSIIHMLVN) the chain is on the extracellular side. An N-linked (GlcNAc...) asparagine glycan is attached at N269. A helical membrane pass occupies residues 281-301 (PANTLASFNSCLNPILYVFLG). At 302-323 (QEFRDRLIYSLYASLERALRED) the chain is on the cytoplasmic side.

The protein belongs to the G-protein coupled receptor 1 family. In terms of tissue distribution, expressed in 0.6 % of a subset of sensory neurons located in the apical layer of the vomeronasal organ. Each neuron appears to express only one receptor gene.

It is found in the cell membrane. Its function is as follows. May have an olfactory function associated with the identification of pathogens or of pathogenic states. The protein is Formyl peptide receptor-related sequence 4 (Fpr-rs4) of Mus musculus (Mouse).